The chain runs to 396 residues: Tryptophan synthase beta chain (396 aa).

N6-(pyridoxal phosphate)lysine is present on Lys86.

Belongs to the TrpB family. Tetramer of two alpha and two beta chains. Pyridoxal 5'-phosphate is required as a cofactor.

The catalysed reaction is (1S,2R)-1-C-(indol-3-yl)glycerol 3-phosphate + L-serine = D-glyceraldehyde 3-phosphate + L-tryptophan + H2O. It participates in amino-acid biosynthesis; L-tryptophan biosynthesis; L-tryptophan from chorismate: step 5/5. In terms of biological role, the beta subunit is responsible for the synthesis of L-tryptophan from indole and L-serine. This chain is Tryptophan synthase beta chain, found in Vibrio cholerae serotype O1 (strain ATCC 39315 / El Tor Inaba N16961).